A 405-amino-acid chain; its full sequence is Multidrug resistance protein MdtA (405 aa).

Residues 1-22 (MKTPRRFPLIALTVAAVLTAAA) form the signal peptide. The segment covering 35–52 (VQNRQGTEQQRASNSQGS) has biased composition (polar residues). The segment at 35–62 (VQNRQGTEQQRASNSQGSAKRAGNAPPV) is disordered.

This sequence belongs to the membrane fusion protein (MFP) (TC 8.A.1) family. Part of a tripartite efflux system composed of MdtA, MdtB and MdtC.

Its subcellular location is the cell inner membrane. The protein is Multidrug resistance protein MdtA of Erwinia amylovora (strain ATCC 49946 / CCPPB 0273 / Ea273 / 27-3).